We begin with the raw amino-acid sequence, 528 residues long: Beta-hexosaminidase subunit alpha (528 aa).

Residues 1–22 form the signal peptide; the sequence is MAGCRLWVSLLLAAALACLATA. Residues 23-88 constitute a propeptide that is removed on maturation; that stretch reads LWPWPQYIQT…PRPSFSKKQQ (66 aa). Cys-58 and Cys-104 are oxidised to a cystine. Residues Asn-115, Asn-157, and Asn-295 are each glycosylated (N-linked (GlcNAc...) asparagine). Cys-277 and Cys-328 form a disulfide bridge. The active-site Proton donor is the Glu-323. Residues 422–423 are critical for hydrolysis GM2 gangliosides; it reads NR. Asn-487 is a glycosylation site (N-linked (GlcNAc...) asparagine). A disulfide bridge links Cys-504 with Cys-521.

Belongs to the glycosyl hydrolase 20 family. There are 3 beta-hexosaminidase isozymes: isozyme A (hexosaminidase A) is a heterodimer composed of one subunit alpha and one subunit beta (chain A and B); isozyme B (hexosaminidase B) is a homodimer of two beta subunits (two chains A and B); isozyme S (hexosaminidase S) is a homodimer of two alpha subunits. The composition of the dimer (isozyme A versus isozyme S) has a significant effect on the substrate specificity of the alpha subunit active site.

The protein resides in the lysosome. The enzyme catalyses Hydrolysis of terminal non-reducing N-acetyl-D-hexosamine residues in N-acetyl-beta-D-hexosaminides.. It carries out the reaction N-acetyl-beta-D-galactosaminyl-(1-&gt;4)-beta-D-3-sulfogalactosyl-(1-&gt;4)-beta-D-glucosyl-(1&lt;-&gt;1')-ceramide + H2O = a beta-D-3-sulfogalactosyl-(1-&gt;4)-beta-D-glucosyl-(1&lt;-&gt;1')-ceramide + N-acetyl-beta-D-galactosamine. It catalyses the reaction a ganglioside GM2 (d18:1(4E)) + H2O = a ganglioside GM3 (d18:1(4E)) + N-acetyl-beta-D-galactosamine. The catalysed reaction is a ganglioside GM2 + H2O = a ganglioside GM3 + N-acetyl-beta-D-galactosamine. The enzyme catalyses beta-D-GalNAc-(1-&gt;4)-alpha-L-IdoA-(1-&gt;3)-beta-D-GalNAc-4-sulfate-(1-&gt;4)-alpha-L-IdoA-(1-&gt;3)-D-GalNAc-4-sulfate + H2O = alpha-L-IdoA-(1-&gt;3)-beta-D-GalNAc-4-sulfate-(1-&gt;4)-alpha-L-IdoA-(1-&gt;3)-D-GalNAc-4-sulfate + N-acetyl-D-galactosamine. It carries out the reaction N-acetyl-beta-D-6-sulfogalactosaminyl-(1-&gt;4)-alpha-L-iduronyl-(1-&gt;3)-N-acetyl-D-6-sulfogalactosamine + H2O = alpha-L-iduronyl-(1-&gt;3)-N-acetyl-D-6-sulfogalactosamine + N-acetyl-D-6-sulfogalactosamine. Its activity is regulated as follows. Addition of GM2A stimulates the hydrolysis of sulfated glycosphingolipid SM2 and the ganglioside GM2. Functionally, hydrolyzes the non-reducing end N-acetyl-D-hexosamine and/or sulfated N-acetyl-D-hexosamine of glycoconjugates, such as the oligosaccharide moieties from proteins and neutral glycolipids, or from certain mucopolysaccharides. The isozyme S is as active as the isozyme A on the anionic bis-sulfated glycans, the chondroitin-6-sulfate trisaccharide (C6S-3), and the dermatan sulfate pentasaccharide, and the sulfated glycosphingolipid SM2. The isozyme B does not hydrolyze each of these substrates, however hydrolyzes efficiently neutral oligosaccharide. Only the isozyme A is responsible for the degradation of GM2 gangliosides in the presence of GM2A. This is Beta-hexosaminidase subunit alpha from Rattus norvegicus (Rat).